The following is a 442-amino-acid chain: Tyrosine--tRNA ligase (442 aa).

Tyr-55 contributes to the L-tyrosine binding site. The short motif at 60-69 is the 'HIGH' region element; that stretch reads PTAPSLHLGN. Positions 190 and 194 each coordinate L-tyrosine. A 'KMSKS' region motif is present at residues 250–254; sequence KFGKS. An ATP-binding site is contributed by Lys-253. An S4 RNA-binding domain is found at 373–438; the sequence is VAIAQALVDT…GKKTLAGVFV (66 aa).

Belongs to the class-I aminoacyl-tRNA synthetase family. TyrS type 1 subfamily. In terms of assembly, homodimer.

It is found in the cytoplasm. It carries out the reaction tRNA(Tyr) + L-tyrosine + ATP = L-tyrosyl-tRNA(Tyr) + AMP + diphosphate + H(+). Functionally, catalyzes the attachment of tyrosine to tRNA(Tyr) in a two-step reaction: tyrosine is first activated by ATP to form Tyr-AMP and then transferred to the acceptor end of tRNA(Tyr). The chain is Tyrosine--tRNA ligase from Leifsonia xyli subsp. xyli (strain CTCB07).